Here is a 102-residue protein sequence, read N- to C-terminus: Large ribosomal subunit protein bL21 (102 aa).

Belongs to the bacterial ribosomal protein bL21 family. Part of the 50S ribosomal subunit. Contacts protein L20.

Its function is as follows. This protein binds to 23S rRNA in the presence of protein L20. This chain is Large ribosomal subunit protein bL21, found in Geobacter sulfurreducens (strain ATCC 51573 / DSM 12127 / PCA).